The sequence spans 930 residues: MKLKDTLNLGKTEFPMRAGLPTKEPVWQKEWEYAKLYQRRQELNQGKPHFTLHDGPPYANGNIHVGHAMNKISKDIIVRSKSMSGFYAPFIPGWDTHGLPIEQVLSKQGVKRKEMDLVEYLKLCREYALSQVDKQREDFKRLGVSGDWENPYVTLTPDYEAAQIRVFGEMANKGYIYRGAKPVYWSWSSESALAEAEIEYHDLVSTSLYYANKVKDGKGVLDTDTYIVVWTTTPFTITASRGLTVGADIDYVLVQPAGEARKFVVAAELLTSLSEKFGWADVQVLETYRGQELNHIVTEHPWDTAVEELVILGDHVTTDSGTGIVHTAPGFGEDDYNVGIANNLEVAVTVDERGIMMKNAGPEFEGQFYEKVVPTVIEKLGNLLLAQEEISHSYPFDWRTKKPIIWRAVPQWFASVSKFRQEILDEIEKVKFHSEWGKVRLYNMIRDRGDWVISRQRAWGVPLPIFYAEDGTAIMVAETIEHVAQLFEEHGSSIWWERDAKDLLPEGFTHPGSPNGEFKKETDIMDVWFDSGSSWNGVVVNRPELTYPADLYLEGSDQYRGWFNSSLITSVANHGVAPYKQILSQGFALDGKGEKMSKSLGNTIAPSDVEKQFGAEILRLWVTSVDSSNDVRISMDILSQVSETYRKIRNTLRFLIANTSDFNPAQDTVAYDELRSVDKYMTIRFNQLVKTIRDAYADFEFLTIYKALVNFINVDLSAFYLDFAKDVVYIEGAKSLERRQMQTVFYDILVKITKLLTPILPHTAEEIWSYLEFETEDFVQLSELPEVQTFANQEEILDTWAAFMDFRGQAQKALEEARNAKVIGKSLEAHLTVYPNEVVKTLLEAVNSNVAQLLIVSELTIAEGPAPEAALSFEDVAFTVERATGEVCDRCRRIDPTTAERSYQAVICDHCASIVEENFAEAVAEGFEEK.

A 'HIGH' region motif is present at residues 57 to 67 (PYANGNIHVGH). Glutamate 554 contributes to the L-isoleucyl-5'-AMP binding site. The 'KMSKS' region signature appears at 595–599 (KMSKS). Position 598 (lysine 598) interacts with ATP. Zn(2+) is bound by residues cysteine 888, cysteine 891, cysteine 908, and cysteine 911.

It belongs to the class-I aminoacyl-tRNA synthetase family. IleS type 1 subfamily. As to quaternary structure, monomer. Requires Zn(2+) as cofactor.

It is found in the cytoplasm. The enzyme catalyses tRNA(Ile) + L-isoleucine + ATP = L-isoleucyl-tRNA(Ile) + AMP + diphosphate. Its function is as follows. Catalyzes the attachment of isoleucine to tRNA(Ile). As IleRS can inadvertently accommodate and process structurally similar amino acids such as valine, to avoid such errors it has two additional distinct tRNA(Ile)-dependent editing activities. One activity is designated as 'pretransfer' editing and involves the hydrolysis of activated Val-AMP. The other activity is designated 'posttransfer' editing and involves deacylation of mischarged Val-tRNA(Ile). In Streptococcus pneumoniae (strain ATCC BAA-255 / R6), this protein is Isoleucine--tRNA ligase.